The chain runs to 445 residues: Histone acetyltransferase ESA1 (445 aa).

Position 17 is a phosphoserine (Ser-17). Residues 22 to 74 enclose the Tudor-knot domain; sequence IIKCQCWVQKNDEERLAEILSINTRKAPPKFYVHYVNYNKRLDEWITTDRINL. The segment at 88–114 is disordered; it reads EDNKKQKKKKATNTSETPQDSLQDGVD. Over residues 99-109 the composition is skewed to polar residues; the sequence is TNTSETPQDSL. The region spanning 162–433 is the MYST-type HAT domain; that stretch reads ARVRNLNRII…IDPNRLIWKP (272 aa). The segment at 195-220 adopts a C2HC MYST-type; degenerate zinc-finger fold; that stretch reads IYIDDFTLQYFGSKKQYERYRKKCTL. An ESA1-RPD3 motif motif is present at residues 245–266; that stretch reads RTWCRNLCLLSKLFLDHKTLYY. Residue Lys-262 is modified to N6-acetyllysine; by autocatalysis. Acetyl-CoA is bound by residues 303–307 and 312–318; these read ACILT and QRMGYGK. Glu-338 functions as the Proton donor/acceptor in the catalytic mechanism. Acetyl-CoA is bound at residue Ser-342.

It belongs to the MYST (SAS/MOZ) family. In terms of assembly, component of the NuA4 histone acetyltransferase complex composed of at least ACT1, ARP4, EAF3, EAF5, EAF6, EAF7, EPL1, ESA1, SWC4, TRA1, VID21, YAF9 and YNG2. The complex interacts with histones H4 (HHF1 and HHF2), H3 (HHT1 and HHT2) and H2A (HTA1 and HTA2). Post-translationally, autoacetylation at Lys-262 is required for proper function.

It carries out the reaction L-lysyl-[histone] + acetyl-CoA = N(6)-acetyl-L-lysyl-[histone] + CoA + H(+). It catalyses the reaction L-lysyl-[protein] + acetyl-CoA = N(6)-acetyl-L-lysyl-[protein] + CoA + H(+). The enzyme catalyses 2-hydroxyisobutanoyl-CoA + L-lysyl-[protein] = N(6)-(2-hydroxyisobutanoyl)-L-lysyl-[protein] + CoA + H(+). The catalysed reaction is (2E)-butenoyl-CoA + L-lysyl-[protein] = N(6)-(2E)-butenoyl-L-lysyl-[protein] + CoA + H(+). Catalytic component of the NuA4 histone acetyltransferase (HAT), a multiprotein complex involved in epigenetic transcriptional activation of selected genes principally by acetylation of nucleosomal histones H4, H3, H2B, H2A and H2A variant H2A.Z. Acetylates histone H4 to form H4K5ac, H4K8ac, H4K12ac and H4K16ac, histone H3 to form H3K14ac, histone H2B to form H2BK16ac, histone H2A to form H2AK4ac and H2AK7ac, and histone variant H2A.Z to form H2A.ZK14ac. Acetylation of histones gives a specific tag for epigenetic transcription initiation and elongation. Acetylation of histone H4 is essential for DNA double-strand break repair through homologous recombination. Involved in cell cycle progression. Recruitment to promoters depends on H3K4me. Also acetylates non-histone proteins, such as ATG3 and PAH1. Regulates autophagy by acetylating ATG3, controlling interaction the interaction between ATG3 and ATG8 and ATG8 lipidation. Acts as a regulator of fatty-acid-induced triacylglycerol synthesis by catalyzing acetylation of PAH1, thereby promoting the synthesis of diacylglycerol. In addition to protein acetyltransferase, can use different acyl-CoA substrates, such as 2-hydroxyisobutanoyl-CoA (2-hydroxyisobutyryl-CoA) or (2E)-butenoyl-CoA (crotonyl-CoA), and is able to mediate protein 2-hydroxyisobutyrylation and crotonylation, respectively. Catalyzes histone crotonylation. The chain is Histone acetyltransferase ESA1 from Saccharomyces cerevisiae (strain ATCC 204508 / S288c) (Baker's yeast).